We begin with the raw amino-acid sequence, 934 residues long: MADPKTKGRGSGGNGSGRRLVIVESPTKARKLASYLGSGYIVESSRGHIRDLPRAASDVPAKYKSQPWARLGVNVDADFEPLYIISPEKRSTVSELRGLLKDVDELYLATDGDREGEAIAWHLLETLKPRIPVKRMVFHEITEPAIRAAAEHPRDLDIDLVDAQETRRILDRLYGYEVSPVLWKKVAPKLSAGRVQSVATRIIVARERDRMAFRSAAYWDILAKLDASVSDPDAAPPTFSARLTAVAGRRVATGRDFDSLGTLRKGDEVIVLDEGSATALAAGLDGTQLTVASAEEKPYARRPYPPFMTSTLQQEASRKLRFSAERTMSIAQRLYENGYITYMRTDSTTLSESAINAARTQARQLYGDEYVAPAPRQYTRKVKNAQEAHEAIRPAGETFATPDAVRRELDGPNIDDFRLYELIWQRTVASQMADARGMTLSLRITGMSGHQEVVFSATGRTLTFPGFLKAYVETVDELVGGEADDAERRLPHLTPGQRLDIVELTPDGHATNPPARYTEASLVKALEELGIGRPSTYSSIIKTIQDRGYVHKKGSALVPSWVAFAVTGLLEQHFGRLVDYDFTAAMEDELDEIAAGNERRTNWLNNFYFGGDHGVPDSVARSGGLKKLVGINLEGIDAREVNSIKLFDDTHGRPIYVRVGKNGPYLERLVAGDTGEPTPQRANLSDSITPDELTLQVAEELFATPQQGRTLGLDPETGHEIVAREGRFGPYVTEILPEPAADAAAAAQGVKKRQKAAGPKPRTGSLLRSMDLQTVTLEDALRLLSLPRVVGVDPASGEEITAQNGRYGPYLKRGNDSRSLVTEDQIFTITLDEALKIYAEPKRRGRQSASAPPLRELGTDPASGKPMVIKDGRFGPYVTDGETNASLRKGDDVASITDERAAELLADRRARGPAKRPARKAARKVPAKKAAKRD.

The segment at 1–20 is disordered; it reads MADPKTKGRGSGGNGSGRRL. Residues 18–142 enclose the Toprim domain; sequence RRLVIVESPT…VKRMVFHEIT (125 aa). Positions 24 and 111 each coordinate Mg(2+). Positions 157 to 616 constitute a Topo IA-type catalytic domain; that stretch reads DIDLVDAQET…FYFGGDHGVP (460 aa). The interaction with DNA stretch occupies residues 191-196; the sequence is SAGRVQ. Catalysis depends on Tyr-342, which acts as the O-(5'-phospho-DNA)-tyrosine intermediate. Disordered regions lie at residues 746 to 765, 842 to 892, and 905 to 934; these read AAQG…RTGS, KRRG…KGDD, and LADR…AKRD. The span at 911 to 934 shows a compositional bias: basic residues; the sequence is RGPAKRPARKAARKVPAKKAAKRD.

Belongs to the type IA topoisomerase family. As to quaternary structure, monomer. The cofactor is Mg(2+).

The enzyme catalyses ATP-independent breakage of single-stranded DNA, followed by passage and rejoining.. Functionally, releases the supercoiling and torsional tension of DNA, which is introduced during the DNA replication and transcription, by transiently cleaving and rejoining one strand of the DNA duplex. Introduces a single-strand break via transesterification at a target site in duplex DNA. The scissile phosphodiester is attacked by the catalytic tyrosine of the enzyme, resulting in the formation of a DNA-(5'-phosphotyrosyl)-enzyme intermediate and the expulsion of a 3'-OH DNA strand. The free DNA strand then undergoes passage around the unbroken strand, thus removing DNA supercoils. Finally, in the religation step, the DNA 3'-OH attacks the covalent intermediate to expel the active-site tyrosine and restore the DNA phosphodiester backbone. This Mycobacterium bovis (strain ATCC BAA-935 / AF2122/97) protein is DNA topoisomerase 1.